Reading from the N-terminus, the 448-residue chain is Protein arginine N-methyltransferase 2 (448 aa).

2 interaction with ESR1 regions span residues 1–289 (MEAP…SALK) and 145–287 (KESL…NLSA). In terms of domain architecture, SH3 spans 42 to 101 (LQPEEFVAIADYTATDETQLSFLRGEKILILRQTTADWWWGERAGCCGYIPANHLGKQLE). Residues Arg73 and Arg84 each carry the asymmetric dimethylarginine modification. The interaction with RB1 stretch occupies residues 95 to 219 (HLGKQLEEYD…DVVLPEKVDV (125 aa)). The SAM-dependent MTase PRMT-type domain occupies 111 to 414 (DEEYFDSYGT…CCVTKKSGME (304 aa)). Positions 124, 133, 157, 180, and 209 each coordinate S-adenosyl-L-methionine. Catalysis depends on residues Glu223 and Glu232.

It belongs to the class I-like SAM-binding methyltransferase superfamily. Protein arginine N-methyltransferase family. Self-associates. Interacts with HNRNPUL1. Interacts with NFKBIA. Interacts with NCOA6 coactivator. Interacts (via SH3 domain) with PRMT8. Interacts with AR. Interacts with ESR1, ESR2, PGR, PPARG, RARA, RXRA and THRB. Interacts with RB1 and E2F1. Expressed in liver, pancreas, lung, brain, skeletal muscle, heart, muscle and fat.

It localises to the cytoplasm. Its subcellular location is the nucleus. It catalyses the reaction L-arginyl-[protein] + 2 S-adenosyl-L-methionine = N(omega),N(omega)-dimethyl-L-arginyl-[protein] + 2 S-adenosyl-L-homocysteine + 2 H(+). Its function is as follows. Arginine methyltransferase that methylates the guanidino nitrogens of arginyl residues in proteins such as STAT3, FBL, histone H4. May inhibit NF-kappa-B transcription, and promote apoptosis. Represses E2F1 transcriptional activity (in a RB1-dependent manner). Has a negative regulation effect on G1 to S transition of mitotic cell cycle. Involved in growth regulation. Acts as a coactivator (with NCOA2) of the androgen receptor (AR)-mediated transactivation. Acts as a coactivator (with estrogen) of estrogen receptor (ER)-mediated transactivation. Enhances PGR, PPARG, RARA-mediated transactivation. This chain is Protein arginine N-methyltransferase 2 (Prmt2), found in Mus musculus (Mouse).